The primary structure comprises 432 residues: CBL-interacting serine/threonine-protein kinase 17 (432 aa).

Residues Tyr11–Phe266 enclose the Protein kinase domain. Residues Leu17 to Val25 and Lys40 each bind ATP. The active-site Proton acceptor is the Asp134. The segment at Asp152–Glu181 is activation loop. A Phosphoserine modification is found at Ser156. Thr170 bears the Phosphothreonine mark. Residues Asp301 to Glu325 enclose the NAF domain. A PPI region spans residues Glu331 to Leu360.

The protein belongs to the protein kinase superfamily. CAMK Ser/Thr protein kinase family. SNF1 subfamily. As to quaternary structure, interacts with CBL1. Mn(2+) is required as a cofactor.

It catalyses the reaction L-seryl-[protein] + ATP = O-phospho-L-seryl-[protein] + ADP + H(+). The catalysed reaction is L-threonyl-[protein] + ATP = O-phospho-L-threonyl-[protein] + ADP + H(+). Its function is as follows. CIPK serine-threonine protein kinases interact with CBL proteins. Binding of a CBL protein to the regulatory NAF domain of CIPK protein lead to the activation of the kinase in a calcium-dependent manner. In Arabidopsis thaliana (Mouse-ear cress), this protein is CBL-interacting serine/threonine-protein kinase 17 (CIPK17).